Reading from the N-terminus, the 249-residue chain is MGVAFDKCDTRPAHIDAILNGLDRYNPETTTVFQDYVVQQCEERTFDCYANLALLKLYQFNPHLLQPETVTNILTKALTVFPSPAFSLCLALLPAHTQPFPTADTDASQSSDFVESIQKLARLSTLLESAQYAQFWSTLNSDDLYADLVADVAGFEELVRIRIAIEVGKAFREINAEVLEQWLDLRSREALEKFVTEVCSWEVDKAGPNGTVVKVPTNKENEARSEVKSERVGVEMFGRVIRRGFEQAA.

One can recognise a PCI domain in the interval Phe46–Glu222.

Belongs to the eIF-3 subunit K family. Component of the eukaryotic translation initiation factor 3 (eIF-3) complex.

The protein resides in the cytoplasm. In terms of biological role, component of the eukaryotic translation initiation factor 3 (eIF-3) complex, which is involved in protein synthesis of a specialized repertoire of mRNAs and, together with other initiation factors, stimulates binding of mRNA and methionyl-tRNAi to the 40S ribosome. The eIF-3 complex specifically targets and initiates translation of a subset of mRNAs involved in cell proliferation. The sequence is that of Eukaryotic translation initiation factor 3 subunit K from Neosartorya fischeri (strain ATCC 1020 / DSM 3700 / CBS 544.65 / FGSC A1164 / JCM 1740 / NRRL 181 / WB 181) (Aspergillus fischerianus).